The following is a 38-amino-acid chain: Large ribosomal subunit protein bL36 (38 aa).

Belongs to the bacterial ribosomal protein bL36 family.

In Alcanivorax borkumensis (strain ATCC 700651 / DSM 11573 / NCIMB 13689 / SK2), this protein is Large ribosomal subunit protein bL36.